The sequence spans 88 residues: Small ribosomal subunit protein bS20 (88 aa).

Residues 1-22 are disordered; the sequence is MANTPSAKKAVNKIAKRTQVNK.

This sequence belongs to the bacterial ribosomal protein bS20 family.

Binds directly to 16S ribosomal RNA. This chain is Small ribosomal subunit protein bS20, found in Bartonella bacilliformis (strain ATCC 35685 / KC583 / Herrer 020/F12,63).